A 498-amino-acid chain; its full sequence is Death-associated inhibitor of apoptosis 2 (498 aa).

BIR repeat units follow at residues 12-77 (RLAT…SMVL), 116-180 (RLVT…PRVQ), and 215-280 (RLRT…QFVL). Zn(2+)-binding residues include cysteine 249, cysteine 252, histidine 269, and cysteine 276. Residues 451–486 (CKVCLDEEVGVVFLPCGHLATCNQCAPSVANCPMCR) form an RING-type zinc finger.

It belongs to the IAP family. In terms of assembly, interacts with the caspase Strica. Interacts (via BIR2 domain) with rpr and grim. Interacts (via the BIR2 and BIR3 domains) with hid. Interacts (via BIR3 domain) with Drice. Interacts with Dredd; likely to bind Dredd simultaneously with Fadd to form a trimeric complex. Post-translationally, caspase-dependent cleavage is required for suppression of Drice-mediated cell death. Expressed in both principal and stellar cells of the Malphigian tubules.

It localises to the nucleus. Its subcellular location is the cytoplasm. In terms of biological role, required for activation of NF-kappaB transcription factors in the immune deficiency (Imd) signaling cascade which is essential for innate immune responses upon infection by Gram-negative bacteria. Promotes cytoplasmic cleavage of Rel and its translocation to the nucleus where it drives expression of antimicrobial peptides. Binds, polyubiquitinates and activates Dredd which is required for Rel-mediated induction of antimicrobial peptides. Anti-apoptotic protein which binds, ubiquitinates and inactivates the effector caspase Drice. Suppresses rpr and hid-dependent cell death in the eye. However, has also been shown to have little, if any, role in the regulation of the canonical caspase-dependent apoptosis pathway. Plays a role in regulating the expression of ion channels. The chain is Death-associated inhibitor of apoptosis 2 (Diap2) from Drosophila melanogaster (Fruit fly).